Consider the following 113-residue polypeptide: Hydrogenase maturation factor HypA (113 aa).

His-2 serves as a coordination point for Ni(2+). 4 residues coordinate Zn(2+): Cys-73, Cys-76, Cys-89, and Cys-92.

The protein belongs to the HypA/HybF family.

In terms of biological role, involved in the maturation of [NiFe] hydrogenases. Required for nickel insertion into the metal center of the hydrogenase. The chain is Hydrogenase maturation factor HypA from Beijerinckia indica subsp. indica (strain ATCC 9039 / DSM 1715 / NCIMB 8712).